The following is a 227-amino-acid chain: 7-cyano-7-deazaguanine synthase (227 aa).

8–18 (FSGGQDSTTCL) is a binding site for ATP. The Zn(2+) site is built by Cys187, Cys196, Cys199, and Cys202.

The protein belongs to the QueC family. The cofactor is Zn(2+).

It carries out the reaction 7-carboxy-7-deazaguanine + NH4(+) + ATP = 7-cyano-7-deazaguanine + ADP + phosphate + H2O + H(+). Its pathway is purine metabolism; 7-cyano-7-deazaguanine biosynthesis. Functionally, catalyzes the ATP-dependent conversion of 7-carboxy-7-deazaguanine (CDG) to 7-cyano-7-deazaguanine (preQ(0)). In Shewanella pealeana (strain ATCC 700345 / ANG-SQ1), this protein is 7-cyano-7-deazaguanine synthase.